Reading from the N-terminus, the 423-residue chain is NADH-quinone oxidoreductase subunit F (423 aa).

54–63 (GRGGAGFSTG) is a binding site for NAD(+). 166–213 (GAGAYICGEETALLESLEGKKGMPRLKPPFPAGFGLYGCPTTINNVES) is a binding site for FMN. Positions 344, 347, 350, and 390 each coordinate [4Fe-4S] cluster.

This sequence belongs to the complex I 51 kDa subunit family. It depends on FMN as a cofactor. [4Fe-4S] cluster is required as a cofactor.

The enzyme catalyses a quinone + NADH + 5 H(+)(in) = a quinol + NAD(+) + 4 H(+)(out). Its function is as follows. NDH-1 shuttles electrons from NADH, via FMN and iron-sulfur (Fe-S) centers, to quinones in the respiratory chain. Couples the redox reaction to proton translocation (for every two electrons transferred, four hydrogen ions are translocated across the cytoplasmic membrane), and thus conserves the redox energy in a proton gradient. This chain is NADH-quinone oxidoreductase subunit F (nuoF), found in Rickettsia akari (strain Hartford).